A 544-amino-acid polypeptide reads, in one-letter code: Prolyl 4-hydroxylase subunit alpha-3 (544 aa).

The N-terminal stretch at 1–19 (MGPAARLAALLAVLAFRAG) is a signal peptide. Residues 107–131 (LEASENIRALKDGYERVEQDLPAFE) are a coiled coil. The TPR repeat unit spans residues 227–260 (EDALDHLAFAYFQAGNVLCALNLSREFLLYSPDN). The N-linked (GlcNAc...) asparagine glycan is linked to Asn-248. The region spanning 422-529 (YAEYLQVVNY…KWVANKWIHE (108 aa)) is the Fe2OG dioxygenase domain. Fe cation is bound by residues His-440 and Asp-442. An N-linked (GlcNAc...) asparagine glycan is attached at Asn-482. Position 510 (His-510) interacts with Fe cation. Lys-520 is a binding site for 2-oxoglutarate.

It belongs to the P4HA family. In terms of assembly, heterotetramer of two alpha-3 chains and two beta chains (the beta chain is the multi-functional PDI). Fe(2+) serves as cofactor. It depends on L-ascorbate as a cofactor. N-glycosylation plays no role in the catalytic activity.

It localises to the endoplasmic reticulum lumen. The catalysed reaction is L-prolyl-[collagen] + 2-oxoglutarate + O2 = trans-4-hydroxy-L-prolyl-[collagen] + succinate + CO2. In terms of biological role, catalyzes the post-translational formation of 4-hydroxyproline in -Xaa-Pro-Gly- sequences in collagens and other proteins. In Bos taurus (Bovine), this protein is Prolyl 4-hydroxylase subunit alpha-3 (P4HA3).